The chain runs to 337 residues: 4-hydroxyproline 2-epimerase (337 aa).

Cys-91 (proton acceptor) is an active-site residue. Substrate contacts are provided by residues 92 to 93, Asp-252, and 257 to 258; these read GH and GT.

The protein belongs to the proline racemase family.

It carries out the reaction trans-4-hydroxy-L-proline = cis-4-hydroxy-D-proline. Catalyzes the epimerization of trans-4-hydroxy-L-proline (t4LHyp) to cis-4-hydroxy-D-proline (c4DHyp). Is likely involved in a degradation pathway that converts t4LHyp to alpha-ketoglutarate. Displays no proline racemase activity. The sequence is that of 4-hydroxyproline 2-epimerase from Cereibacter sphaeroides (strain ATCC 17029 / ATH 2.4.9) (Rhodobacter sphaeroides).